The sequence spans 192 residues: Ribosomal RNA small subunit methyltransferase G (192 aa).

S-adenosyl-L-methionine-binding positions include G63, F68, 112–113 (IE), and R125.

Belongs to the methyltransferase superfamily. RNA methyltransferase RsmG family.

The protein resides in the cytoplasm. It catalyses the reaction guanosine(527) in 16S rRNA + S-adenosyl-L-methionine = N(7)-methylguanosine(527) in 16S rRNA + S-adenosyl-L-homocysteine. Functionally, specifically methylates the N7 position of guanine in position 527 of 16S rRNA. In Rickettsia felis (strain ATCC VR-1525 / URRWXCal2) (Rickettsia azadi), this protein is Ribosomal RNA small subunit methyltransferase G.